We begin with the raw amino-acid sequence, 206 residues long: Homoserine/homoserine lactone efflux protein (206 aa).

6 helical membrane passes run W5 to I25, G45 to F65, S68 to I88, F117 to I137, I148 to L168, and M182 to S202.

It belongs to the Rht family.

It localises to the cell membrane. Functionally, conducts the efflux of homoserine and homoserine lactone. In Escherichia coli O157:H7, this protein is Homoserine/homoserine lactone efflux protein (rhtB).